The primary structure comprises 210 residues: Inner membrane-spanning protein YciB (210 aa).

6 helical membrane-spanning segments follow: residues 12–32 (EVSP…FFFA), 53–73 (IFIA…ASWI), 78–98 (LPMM…LTLW), 115–135 (LFGA…GYVF), 148–168 (KLTI…EVIW), and 175–195 (FWVA…TLAQ).

It belongs to the YciB family.

It is found in the cell inner membrane. Functionally, plays a role in cell envelope biogenesis, maintenance of cell envelope integrity and membrane homeostasis. The chain is Inner membrane-spanning protein YciB from Rhizobium meliloti (strain 1021) (Ensifer meliloti).